Consider the following 83-residue polypeptide: High-potential iron-sulfur protein (83 aa).

[4Fe-4S] cluster-binding residues include Cys43, Cys46, Cys61, and Cys75.

The protein belongs to the high-potential iron-sulfur protein (HiPIP) family. In terms of assembly, homodimer.

It is found in the periplasm. In terms of biological role, specific class of high-redox-potential 4Fe-4S ferredoxins. Functions in anaerobic electron transport in most purple and in some other photosynthetic bacteria and in at least one genus (Paracoccus) of halophilic, denitrifying bacteria. The protein is High-potential iron-sulfur protein of Isochromatium buderi (Chromatium buderi).